A 664-amino-acid polypeptide reads, in one-letter code: Armadillo repeat protein involved in nucleocytoplasmic transport Syo2 (664 aa).

An ARM repeat occupies 77–119 (GLVSKLIDRISDDSVEVVVEATGALRNLAIEEGYSICMDMYRK).

Belongs to the nuclear import and ribosome assembly adapter family. Forms a heterotrimeric complex with rpl5 and rpl11a or rpl11b; interaction of this complex with kap104 allows the nuclear import of the heterotrimer. Component of a hexameric 5S RNP precursor complex; this complex acts as a precursor for ribosome assembly.

The protein resides in the cytoplasm. It localises to the nucleus. Its function is as follows. Nuclear import adapter that specifically recruits the two functionally and topologically linked ribosomal proteins rpl5 and rpl11 (encoded by rpl11a and rpl11b). Guarantees that this cargo pair remains bound together from the time of synthesis in the cytoplasm until delivery to the nascent 5S rRNA in the nucleus. This Schizosaccharomyces pombe (strain 972 / ATCC 24843) (Fission yeast) protein is Armadillo repeat protein involved in nucleocytoplasmic transport Syo2.